The chain runs to 238 residues: Chloride intracellular channel exl-1 (238 aa).

This sequence belongs to the chloride channel CLIC family. Expressed in the intestine, neurons and muscles.

The protein resides in the cytoplasm. It is found in the membrane. Its subcellular location is the lysosome membrane. The protein localises to the golgi apparatus membrane. Functionally, probable chloride channel. The protein is Chloride intracellular channel exl-1 (exl-1) of Caenorhabditis elegans.